Consider the following 522-residue polypeptide: F-box-like/WD repeat-containing protein TBL1XR1-B (522 aa).

The LisH domain occupies 4–36; the sequence is SSDEVNFLVYRYLQESGFSHSAFTFGIESHISQ. In terms of domain architecture, F-box-like spans 41–86; that stretch reads GALVPPAALISIIQKGLQYVEAEVSINEDGTLFDGRPIESLSLIDA. The interval 122-150 is disordered; that stretch reads ATSANNQQPPAKNGESTANGEENGGHALA. The segment covering 123 to 141 has biased composition (polar residues); that stretch reads TSANNQQPPAKNGESTANG. 8 WD repeats span residues 175-214, 231-270, 272-311, 314-352, 355-394, 397-445, 448-487, and 489-522; these read GHESEVFICAWNPVSDLLASGSGDSTARIWNLSENSTSGS, PSNKDVTSLDWNSEGTLLATGSYDGFARIWTKDGNLASTL, QHKGPIFALKWNKKGNFILSAGVDKTTIIWDAHTGEAKQQ, FHSAPALDVDWQSNNTFASCSTDMCIHVCKLGQDRPIKT, GHTNEVNAIKWDPTGNLLASCSDDMTLKIWSMKHDTCVHD, AHNK…CIHT, KHQEPVYSVAFSPDGRYLASGSFDKCVHIWNTQTGALVHS, and RGTGGIFEVCWNAAGDKVGASASDGSVCVLDLRK.

This sequence belongs to the WD repeat EBI family. Interacts with heterodimers of rxra and thrb, and this interaction is abrogated by thyroid hormone binding to thrb. Interacts with ncor1.

The protein localises to the nucleus. Its function is as follows. F-box-like protein which acts as an integral component of the N-CoR transcriptional corepressor complex. Probably regulates transcription activation mediated by nuclear receptors. May mediate the recruitment of the 19S proteasome complex, leading to the subsequent proteasomal degradation of the N-CoR complex, thereby allowing cofactor exchange and transcription activation. In Xenopus laevis (African clawed frog), this protein is F-box-like/WD repeat-containing protein TBL1XR1-B (tbl1xr1-b).